Consider the following 445-residue polypeptide: Na(+)-translocating NADH-quinone reductase subunit A (445 aa).

The protein belongs to the NqrA family. Composed of six subunits; NqrA, NqrB, NqrC, NqrD, NqrE and NqrF.

It carries out the reaction a ubiquinone + n Na(+)(in) + NADH + H(+) = a ubiquinol + n Na(+)(out) + NAD(+). Functionally, NQR complex catalyzes the reduction of ubiquinone-1 to ubiquinol by two successive reactions, coupled with the transport of Na(+) ions from the cytoplasm to the periplasm. NqrA to NqrE are probably involved in the second step, the conversion of ubisemiquinone to ubiquinol. The sequence is that of Na(+)-translocating NADH-quinone reductase subunit A from Pseudomonas aeruginosa (strain ATCC 15692 / DSM 22644 / CIP 104116 / JCM 14847 / LMG 12228 / 1C / PRS 101 / PAO1).